A 217-amino-acid polypeptide reads, in one-letter code: MPLGRAPRIGVGGPVGSGKTALVAALCRSLAPSLRLGVVTNDIYTTEDADFLRRAGVLDPQRIRAVETGCCPHTAIRDDITANLDTVEDLEADTGPLDLVLVESGGDNLTATFSYGLIDRQIFVVDVAGGDKVPRKGGPGVTLSDLLVINKTDLAPLVGADLGVMARDAAAARGPRPVLFTSLTADPTAGDVTAWVRAQLADLSPHGPRGATPAAAG.

13–20 is a binding site for GTP; that stretch reads GPVGSGKT.

The protein belongs to the SIMIBI class G3E GTPase family. UreG subfamily. As to quaternary structure, homodimer. UreD, UreF and UreG form a complex that acts as a GTP-hydrolysis-dependent molecular chaperone, activating the urease apoprotein by helping to assemble the nickel containing metallocenter of UreC. The UreE protein probably delivers the nickel.

It is found in the cytoplasm. Facilitates the functional incorporation of the urease nickel metallocenter. This process requires GTP hydrolysis, probably effectuated by UreG. In Frankia alni (strain DSM 45986 / CECT 9034 / ACN14a), this protein is Urease accessory protein UreG.